The chain runs to 143 residues: Large ribosomal subunit protein uL11 (143 aa).

It belongs to the universal ribosomal protein uL11 family. Part of the ribosomal stalk of the 50S ribosomal subunit. Interacts with L10 and the large rRNA to form the base of the stalk. L10 forms an elongated spine to which L12 dimers bind in a sequential fashion forming a multimeric L10(L12)X complex. In terms of processing, one or more lysine residues are methylated.

In terms of biological role, forms part of the ribosomal stalk which helps the ribosome interact with GTP-bound translation factors. The chain is Large ribosomal subunit protein uL11 from Leifsonia xyli subsp. xyli (strain CTCB07).